A 533-amino-acid polypeptide reads, in one-letter code: MYRFLGLGTHPNDDQNKIHVLGRQYDPIKTQETEGKDLDLNSRFQQVLDSIKDGNKKSTTYSQSFIDDVYSKIWLTYRAGFPPIARDKDSPTFTLGALLRGQFDFNEIGFTSDAGWGCMIRTSQSLLANALLFLHLGRDWVFKAKDPANVEHDRIISWFVDIPDEPFSIHNFVQQGIKCCDKKPGEWFGPSAASRAIKNLCKEYPPCGLRVYFSSDCGDVYDTEVRELAYGDSDTFTPILVLLGIRLGVEKVNLYIGDLLRECLSLKQSVGISGRKTSFLALLSIGFQGDYLFYLIPTFPKKALTFGKHGEPVHRLQTKKTDENAAGQYPVFKYWIQIMKQTMMTAMKASKTTASTLKFFRVLMSNQSTHQKVTKLHLSHMDPSMLIGFLITSEDDFNDWKENIGKKDPSHKIVHITETKVSESTSNFQFNSLRSNSIADYDNCSGEDCDSAAIASDSDDFVDLAADFAVTGLEPRTHTGVDDETSSDYVQHFPIRRFSQPVIVSREDVVPTLSEDNGVIALDDKMSGISVGR.

The Nucleophile role is filled by Cys-118.

This sequence belongs to the peptidase C54 family.

Its subcellular location is the cytoplasm. It is found in the nucleus. The protein localises to the preautophagosomal structure. The catalysed reaction is [protein]-C-terminal L-amino acid-glycyl-phosphatidylethanolamide + H2O = [protein]-C-terminal L-amino acid-glycine + a 1,2-diacyl-sn-glycero-3-phosphoethanolamine. Its function is as follows. Cysteine protease that plays a key role in cytoplasm to vacuole transport (Cvt) and autophagy by mediating both proteolytic activation and delipidation of ATG8. Required for selective autophagic degradation of the nucleus (nucleophagy) as well as for mitophagy which contributes to regulate mitochondrial quantity and quality by eliminating the mitochondria to a basal level to fulfill cellular energy requirements and preventing excess ROS production. The protease activity is required for proteolytic activation of ATG8: cleaves the C-terminal amino acid of ATG8 to reveal a C-terminal glycine. ATG8 ubiquitin-like activity requires the exposure of the glycine at the C-terminus for its conjugation to phosphatidylethanolamine (PE) and its insertion to membranes, which is necessary for autophagy. The ATG8-PE conjugate mediates tethering between adjacent membranes and stimulates membrane hemifusion, leading to expansion of the autophagosomal membrane during autophagy. In addition to the protease activity, also catalyzes deconjugation of PE-conjugated forms of ATG8 during macroautophagy: ATG8 delipidation is required to release the protein from membranes, which facilitates multiple events during macroautophagy, and especially for efficient autophagosome biogenesis, the assembly of ATG9-containing tubulovesicular clusters into phagophores/autophagosomes, and for the disassembly of PAS-associated ATG components. ATG8 delipidation by ATG4 also recycles ATG8-PE generated on inappropriate membranes to maintain a reservoir of unlipidated ATG8 that is required for autophagosome formation at the PAS. The protein is Probable cysteine protease ATG4 (ATG4) of Komagataella pastoris (Yeast).